The sequence spans 75 residues: Cruzioseptin-8 (75 aa).

An N-terminal signal peptide occupies residues 1–22; that stretch reads MAFLKKCLFLVLFLGLVSLSIC. The propeptide occupies 23–43; it reads EEEKREEENEEVQEDDDQSEE. The segment at 25–44 is disordered; that stretch reads EKREEENEEVQEDDDQSEEK. Residues 30 to 41 are compositionally biased toward acidic residues; sequence ENEEVQEDDDQS. A Glutamine amide modification is found at Gln72. A propeptide spanning residues 74–75 is cleaved from the precursor; sequence EQ.

As to expression, expressed by the skin glands.

It localises to the secreted. Its function is as follows. Has antimicrobial activity. In Cruziohyla calcarifer (Splendid leaf frog), this protein is Cruzioseptin-8.